The sequence spans 566 residues: Protein pacG (566 aa).

The NDT80 DNA-binding region spans 79-326 (TSFDPPPPAE…RSPRNFQSRK (248 aa)). 2 disordered regions span residues 314–422 (VRGR…EAHR) and 448–470 (DSRPHTSFSNDLASKSLSVDSGR). A compositionally biased stretch (low complexity) spans 333 to 349 (SAAASRKNAQAAAASNN). Composition is skewed to polar residues over residues 365 to 391 (VKSSSPETSSNGVPQQSPPNWALATNS), 403 to 413 (HSSVYSQSSPE), and 452 to 466 (HTSFSNDLASKSLSV).

The protein localises to the nucleus. Its subcellular location is the cytoplasm. Transcription factor that acts as a positive regulator of nonrepressible acid phosphatase activity. Is a major regulator of responses to nitrogen and carbon starvation and is essential for the expression of genes involved in vegetative incompatibility (like pin-c, het-6, and tol). Vegetative incompatibility is a non-self-recognition system ubiquitous in filamentous fungi which results in programmed cell death. The sequence is that of Protein pacG (pacG) from Emericella nidulans (strain FGSC A4 / ATCC 38163 / CBS 112.46 / NRRL 194 / M139) (Aspergillus nidulans).